Reading from the N-terminus, the 44-residue chain is Poly-ADP-ribosylation-amplifying and CtIP-maintaining micropeptide (44 aa).

The interval 1-44 (MAASGGTKKAQSGGRRLREPSSRPSRRARQRPRRGALRKAGRFL) is disordered. A compositionally biased stretch (basic residues) spans 24 to 44 (PSRRARQRPRRGALRKAGRFL).

As to quaternary structure, interacts with KLHL15; preventing ubiquitination and degradation of RBBP8/CtIP. Interacts with PARP1.

The protein resides in the nucleus. The protein localises to the nucleolus. Its subcellular location is the chromosome. In terms of biological role, micropeptide that acts as a regulator of DNA repair both by preventing KLHL15-mediated ubiquitination and degradation of RBBP8/CtIP, and by promoting the poly-ADP-ribosyltransferase activity of PARP1. Prevents KLHL15-mediated ubiquitination of RBBP8/CtIP by competitively blocking the association between KLHL15 and RBBP8/CtIP. Recruited to DNA damage sites via association with poly-ADP-ribose chains, and enhances the poly-ADP-ribosyltransferase activity of PARP1. This is Poly-ADP-ribosylation-amplifying and CtIP-maintaining micropeptide from Homo sapiens (Human).